Here is a 427-residue protein sequence, read N- to C-terminus: Trigger factor (427 aa).

Positions 163–248 (GDIAVIDFKG…IKSIKVKELP (86 aa)) constitute a PPIase FKBP-type domain.

Belongs to the FKBP-type PPIase family. Tig subfamily.

The protein resides in the cytoplasm. It carries out the reaction [protein]-peptidylproline (omega=180) = [protein]-peptidylproline (omega=0). Functionally, involved in protein export. Acts as a chaperone by maintaining the newly synthesized protein in an open conformation. Functions as a peptidyl-prolyl cis-trans isomerase. This Clostridium beijerinckii (strain ATCC 51743 / NCIMB 8052) (Clostridium acetobutylicum) protein is Trigger factor.